Consider the following 462-residue polypeptide: Serine--tRNA ligase, cytoplasmic (462 aa).

K241 is covalently cross-linked (Glycyl lysine isopeptide (Lys-Gly) (interchain with G-Cter in URM1)). 246–248 (TSE) is an L-serine binding site. Residues 279-281 (RRE) and V295 each bind ATP. E302 provides a ligand contact to L-serine. Residues K350 and K351 each participate in a glycyl lysine isopeptide (Lys-Gly) (interchain with G-Cter in URM1) cross-link. 366-369 (ELVS) contacts ATP. Cysteine persulfide is present on residues C373 and C400. T404 contributes to the L-serine binding site.

Belongs to the class-II aminoacyl-tRNA synthetase family. Type-1 seryl-tRNA synthetase subfamily. In terms of assembly, homodimer; the tRNA molecule probably binds across the dimer. Interacts with ABP140; interaction is required for the tRNA N(3)-methylcytidine methyltransferase activity of ABP140. In terms of processing, conjugated to URM1, a ubiquitin-like protein, in response to oxidative stresses. The attachment of URM1 to lysine residues exclusively depends on the presence of a peroxidatic cysteine in the target protein, with low specificity for the particular residue, motif, or structural context at which urmylation can occur. The URM1-conjugation reaction is mechanistically and directly coupled to the process of cysteine persulfidation, transfering the sulfur atom of the URM1 thiocarboxyl group to redox-active cysteine residues in the target protein if it is exposed to oxidative conditions. Persulfidated on specific redox-active cysteine residues. Persulfidation (also called protein S-sulfhydration) may provide a molecular mechanism that enables cells to protect vulnerable cysteine residues from reactive oxygen species (ROS) under stress conditions.

The protein resides in the cytoplasm. It is found in the cytosol. The enzyme catalyses tRNA(Ser) + L-serine + ATP = L-seryl-tRNA(Ser) + AMP + diphosphate + H(+). In terms of biological role, catalyzes the attachment of serine to tRNA(Ser) in a two-step reaction: serine is first activated by ATP to form Ser-AMP and then transferred to the acceptor end of tRNA(Ser). This Saccharomyces cerevisiae (strain ATCC 204508 / S288c) (Baker's yeast) protein is Serine--tRNA ligase, cytoplasmic (SES1).